Consider the following 309-residue polypeptide: Mitochondrial import receptor subunit TOM34 (309 aa).

3 TPR repeats span residues 9 to 42, 51 to 84, and 86 to 118; these read VEEL…LQAQ, SVLY…VPFS, and KPLL…DDSV. The residue at position 160 (Ser160) is a Phosphoserine. The interval 161–189 is disordered; the sequence is LPSENHKEMAKSKSKETTATKNRVPSAGD. The segment covering 164 to 178 has biased composition (basic and acidic residues); sequence ENHKEMAKSKSKETT. Residue Ser186 is modified to Phosphoserine. 3 TPR repeats span residues 193-226, 227-260, and 262-294; these read AKVL…SNLE, SATY…DGKN, and KAFY…EPRN. Lys197 participates in a covalent cross-link: Glycyl lysine isopeptide (Lys-Gly) (interchain with G-Cter in SUMO2).

It belongs to the Tom34 family. In terms of assembly, interacts with HSP90A, VCP, ATP6V1D, KIAA0665, AMPK, and DMAP1 through its TPR repeat.

The protein localises to the cytoplasm. Its subcellular location is the mitochondrion outer membrane. Functionally, plays a role in the import of cytosolically synthesized preproteins into mitochondria. Binds the mature portion of precursor proteins. Interacts with cellular components, and possesses weak ATPase activity. May be a chaperone-like protein that helps to keep newly synthesized precursors in an unfolded import compatible state. This Pongo abelii (Sumatran orangutan) protein is Mitochondrial import receptor subunit TOM34 (TOMM34).